A 495-amino-acid chain; its full sequence is 3-octaprenyl-4-hydroxybenzoate carboxy-lyase (495 aa).

Asn-172 is a Mn(2+) binding site. Prenylated FMN-binding positions include 175–177, 189–191, and 194–195; these read IYR, RWL, and RG. Glu-238 is a binding site for Mn(2+). Asp-287 acts as the Proton donor in catalysis.

Belongs to the UbiD family. Homohexamer. Prenylated FMN is required as a cofactor. Mn(2+) serves as cofactor.

The protein resides in the cell membrane. It catalyses the reaction a 4-hydroxy-3-(all-trans-polyprenyl)benzoate + H(+) = a 2-(all-trans-polyprenyl)phenol + CO2. The protein operates within cofactor biosynthesis; ubiquinone biosynthesis. Its function is as follows. Catalyzes the decarboxylation of 3-octaprenyl-4-hydroxy benzoate to 2-octaprenylphenol, an intermediate step in ubiquinone biosynthesis. The polypeptide is 3-octaprenyl-4-hydroxybenzoate carboxy-lyase (Yersinia pseudotuberculosis serotype O:1b (strain IP 31758)).